We begin with the raw amino-acid sequence, 516 residues long: RNA-binding region-containing protein 3 (516 aa).

4 disordered regions span residues 1–27 (MAAPEQPLPMSRGCQNSSSLSPPRGDR), 106–130 (VHSPCPSLGTEKKKRSDDPVEDDKE), 210–254 (EDYM…DEDR), and 264–283 (ANLQPKRPKPIKQRHVRKKR). Residue serine 21 is modified to Phosphoserine. Positions 27-102 (RTLLVRHLPA…HTLVVEFAKE (76 aa)) constitute an RRM 1 domain. Serine 108 carries the phosphoserine modification. A compositionally biased stretch (basic and acidic residues) spans 115–130 (TEKKKRSDDPVEDDKE). The segment covering 217 to 230 (APLPPTSPQPPEEP) has biased composition (pro residues). Positions 269 to 283 (KRPKPIKQRHVRKKR) are enriched in basic residues. An RRM 2 domain is found at 419–502 (CRIYVKNLAK…KPMVVQFARS (84 aa)).

As to quaternary structure, component of the U11/U12 snRNPs that are part of the U12-type spliceosome. Found in a complex with m(7)G-capped U12 snRNA. Interacts with PDCD7.

It is found in the nucleus. In terms of biological role, participates in pre-mRNA U12-dependent splicing, performed by the minor spliceosome which removes U12-type introns. U12-type introns comprises less than 1% of all non-coding sequences. Binds to the 3'-stem-loop of m(7)G-capped U12 snRNA. The protein is RNA-binding region-containing protein 3 (RNPC3) of Bos taurus (Bovine).